Reading from the N-terminus, the 83-residue chain is Toxin To15 (83 aa).

A signal peptide spans 1-19; the sequence is MKGIILLISCLMLIEVVVG. The 62-residue stretch at 21-82 folds into the LCN-type CS-alpha/beta domain; the sequence is KEGYPLDSSG…IWNAKTNKCY (62 aa). 4 disulfides stabilise this stretch: Cys-31–Cys-81, Cys-35–Cys-57, Cys-43–Cys-62, and Cys-47–Cys-64.

This sequence belongs to the long (4 C-C) scorpion toxin superfamily. Sodium channel inhibitor family. Beta subfamily. Expressed by the venom gland.

It localises to the secreted. In terms of biological role, beta toxins bind voltage-independently at site-4 of sodium channels (Nav) and shift the voltage of activation toward more negative potentials thereby affecting sodium channel activation and promoting spontaneous and repetitive firing. The chain is Toxin To15 from Tityus obscurus (Amazonian scorpion).